Reading from the N-terminus, the 115-residue chain is Basic leucine zipper transcriptional factor ATF-like (115 aa).

Positions 1-60 (MQQESDRNEQGYSSSPPSSNKQDSSDDTKKNHRREKNRIAAQKSRQRQTEKADSLHIESE) are disordered. The segment covering 13 to 22 (SSSPPSSNKQ) has biased composition (low complexity). Positions 27–90 (DTKKNHRREK…KYLTCVLSTH (64 aa)) constitute a bZIP domain. Residues 29 to 51 (KKNHRREKNRIAAQKSRQRQTEK) are basic motif. Residues 47-60 (RQTEKADSLHIESE) are compositionally biased toward basic and acidic residues. Positions 55 to 83 (LHIESENLERLNSALRGEISGLREELKYL) are leucine-zipper.

It belongs to the bZIP family.

The protein resides in the nucleus. It localises to the cytoplasm. Its function is as follows. AP-1 family transcription factor that controls the differentiation of lineage-specific cells in the immune system: specifically mediates the differentiation of T-helper 17 cells (Th17), follicular T-helper cells (TfH), CD8(+) dendritic cells and class-switch recombination (CSR) in B-cells. The protein is Basic leucine zipper transcriptional factor ATF-like (batf) of Xenopus laevis (African clawed frog).